We begin with the raw amino-acid sequence, 180 residues long: NAD(P)H-quinone oxidoreductase subunit I, chloroplastic (180 aa).

2 consecutive 4Fe-4S ferredoxin-type domains span residues 55–84 and 95–124; these read GRIH…VDWR and LNYS…MTEE. Residues Cys64, Cys67, Cys70, Cys74, Cys104, Cys107, Cys110, and Cys114 each contribute to the [4Fe-4S] cluster site.

The protein belongs to the complex I 23 kDa subunit family. In terms of assembly, NDH is composed of at least 16 different subunits, 5 of which are encoded in the nucleus. It depends on [4Fe-4S] cluster as a cofactor.

It localises to the plastid. It is found in the chloroplast thylakoid membrane. It catalyses the reaction a plastoquinone + NADH + (n+1) H(+)(in) = a plastoquinol + NAD(+) + n H(+)(out). It carries out the reaction a plastoquinone + NADPH + (n+1) H(+)(in) = a plastoquinol + NADP(+) + n H(+)(out). NDH shuttles electrons from NAD(P)H:plastoquinone, via FMN and iron-sulfur (Fe-S) centers, to quinones in the photosynthetic chain and possibly in a chloroplast respiratory chain. The immediate electron acceptor for the enzyme in this species is believed to be plastoquinone. Couples the redox reaction to proton translocation, and thus conserves the redox energy in a proton gradient. This Dioscorea elephantipes (Elephant's foot yam) protein is NAD(P)H-quinone oxidoreductase subunit I, chloroplastic.